A 255-amino-acid polypeptide reads, in one-letter code: Small ribosomal subunit protein eS1 (255 aa).

Alanine 2 is subject to N-acetylalanine; partial.

The protein belongs to the eukaryotic ribosomal protein eS1 family. As to quaternary structure, component of the small ribosomal subunit. Mature ribosomes consist of a small (40S) and a large (60S) subunit. The 40S subunit contains about 33 different proteins and 1 molecule of RNA (18S). The 60S subunit contains about 49 different proteins and 3 molecules of RNA (25S, 5.8S and 5S).

It localises to the cytoplasm. In Kluyveromyces lactis (strain ATCC 8585 / CBS 2359 / DSM 70799 / NBRC 1267 / NRRL Y-1140 / WM37) (Yeast), this protein is Small ribosomal subunit protein eS1.